A 433-amino-acid polypeptide reads, in one-letter code: GTPase Obg (433 aa).

In terms of domain architecture, Obg spans 1–158 (MFVDQVKIYV…RNVILELKLL (158 aa)). An OBG-type G domain is found at 159 to 329 (ADVGLVGFPS…LLFAIADLLE (171 aa)). Residues 165 to 172 (GFPSVGKS), 190 to 194 (FTTLV), 212 to 215 (DLPG), 282 to 285 (NKMD), and 310 to 312 (SAA) contribute to the GTP site. Positions 172 and 192 each coordinate Mg(2+). One can recognise an OCT domain in the interval 350–428 (KYEKEELPFT…LLDYEFEFVD (79 aa)).

This sequence belongs to the TRAFAC class OBG-HflX-like GTPase superfamily. OBG GTPase family. In terms of assembly, monomer. Mg(2+) serves as cofactor.

The protein resides in the cytoplasm. Functionally, an essential GTPase which binds GTP, GDP and possibly (p)ppGpp with moderate affinity, with high nucleotide exchange rates and a fairly low GTP hydrolysis rate. Plays a role in control of the cell cycle, stress response, ribosome biogenesis and in those bacteria that undergo differentiation, in morphogenesis control. The protein is GTPase Obg of Geobacillus thermodenitrificans (strain NG80-2).